The primary structure comprises 280 residues: NAD-capped RNA hydrolase NudC (280 aa).

R83 provides a ligand contact to substrate. Positions 113, 116, 131, and 134 each coordinate Zn(2+). Y139 provides a ligand contact to substrate. Residues 140–268 form the Nudix hydrolase domain; that stretch reads PRVAPAIIVL…ASRRLLDDAL (129 aa). Positions 177, 193, and 197 each coordinate a divalent metal cation. The Nudix box signature appears at 178–199; the sequence is GFVEPSETLEAAVHREVGEEVG. 211-218 serves as a coordination point for substrate; it reads QPWPFPHS. Residue E238 coordinates a divalent metal cation.

It belongs to the Nudix hydrolase family. NudC subfamily. As to quaternary structure, homodimer. Mg(2+) serves as cofactor. Mn(2+) is required as a cofactor. It depends on Zn(2+) as a cofactor.

The catalysed reaction is a 5'-end NAD(+)-phospho-ribonucleoside in mRNA + H2O = a 5'-end phospho-adenosine-phospho-ribonucleoside in mRNA + beta-nicotinamide D-ribonucleotide + 2 H(+). The enzyme catalyses NAD(+) + H2O = beta-nicotinamide D-ribonucleotide + AMP + 2 H(+). It carries out the reaction NADH + H2O = reduced beta-nicotinamide D-ribonucleotide + AMP + 2 H(+). In terms of biological role, mRNA decapping enzyme that specifically removes the nicotinamide adenine dinucleotide (NAD) cap from a subset of mRNAs by hydrolyzing the diphosphate linkage to produce nicotinamide mononucleotide (NMN) and 5' monophosphate mRNA. The NAD-cap is present at the 5'-end of some mRNAs and stabilizes RNA against 5'-processing. Has preference for mRNAs with a 5'-end purine. Catalyzes the hydrolysis of a broad range of dinucleotide pyrophosphates. The chain is NAD-capped RNA hydrolase NudC from Deinococcus radiodurans (strain ATCC 13939 / DSM 20539 / JCM 16871 / CCUG 27074 / LMG 4051 / NBRC 15346 / NCIMB 9279 / VKM B-1422 / R1).